The sequence spans 286 residues: Pantothenate synthetase (286 aa).

An ATP-binding site is contributed by 30–37 (MGNLHSGH). His-37 (proton donor) is an active-site residue. Gln-61 is a binding site for (R)-pantoate. Gln-61 lines the beta-alanine pocket. 149 to 152 (GQKD) is an ATP binding site. Gln-155 serves as a coordination point for (R)-pantoate. ATP contacts are provided by residues Val-178 and 186–189 (LSSR).

It belongs to the pantothenate synthetase family. Homodimer.

It localises to the cytoplasm. It catalyses the reaction (R)-pantoate + beta-alanine + ATP = (R)-pantothenate + AMP + diphosphate + H(+). Its pathway is cofactor biosynthesis; (R)-pantothenate biosynthesis; (R)-pantothenate from (R)-pantoate and beta-alanine: step 1/1. Functionally, catalyzes the condensation of pantoate with beta-alanine in an ATP-dependent reaction via a pantoyl-adenylate intermediate. The protein is Pantothenate synthetase of Pseudomonas fluorescens (strain ATCC BAA-477 / NRRL B-23932 / Pf-5).